A 110-amino-acid chain; its full sequence is Mobility group protein 1B (110 aa).

The HMG box DNA-binding region spans 5–71 (PKRPLSAYML…NYIRALQEYE (67 aa)). Positions 71–81 (ERNGGGGDDKG) are enriched in basic and acidic residues. A disordered region spans residues 71-110 (ERNGGGGDDKGKKRKGAAPKKGAGKKSKKGAHSDDDGDSE). Residues 82–100 (KKRKGAAPKKGAGKKSKKG) show a composition bias toward basic residues.

It belongs to the HMGB family.

The protein localises to the nucleus. The protein resides in the chromosome. Its function is as follows. Found in condensed chromomeres. Binds preferentially to AT-rich DNA. This chain is Mobility group protein 1B (HMG1B), found in Chironomus tentans (Midge).